We begin with the raw amino-acid sequence, 763 residues long: Actin filament-associated protein 1-like 1 (763 aa).

A disordered region spans residues 83-137 (LQDMPEDEAESCKAASPEPAKSPSLRHTADLPPPLPNRPPPEDYYEEALPLGPGK). Ser98, Ser104, and Ser153 each carry phosphoserine. The disordered stretch occupies residues 169 to 210 (TRMNGELKNSYNDSDAMSSSYESYDEEEEEGKGPQPTHQWPS). Polar residues predominate over residues 175 to 185 (LKNSYNDSDAM). One can recognise a PH 1 domain in the interval 220–316 (DCRICAFLLR…WLKVIREVSK (97 aa)). Phosphoserine occurs at positions 329 and 343. The tract at residues 343–380 (SQEKQTSDSDSLGMGDSCSTLGREHGKGKKSSLSELKG) is disordered. The PH 2 domain occupies 413 to 507 (EVPCCGYLNV…WLGLLLVEMG (95 aa)). Residue Tyr552 is modified to Phosphotyrosine. Residues 561 to 604 (QDEEPERPPGAQVKRHASTCSEKSHRVDPQVKVKRHASSAHQYK) are disordered. Basic and acidic residues predominate over residues 582-591 (EKSHRVDPQV). The stretch at 606 to 694 (GKNRAEEDAR…LVTVKERLQQ (89 aa)) forms a coiled coil. The span at 712–724 (SGETANKPQNNVP) shows a compositional bias: polar residues. The interval 712-763 (SGETANKPQNNVPEQPLPVNCVSELRKRSPSIINSNQGRVLQKAKEWEMKKT) is disordered. Ser742 is subject to Phosphoserine. Residues 754–763 (KAKEWEMKKT) are compositionally biased toward basic and acidic residues.

Interacts with CTTN.

The protein localises to the cytoplasm. It localises to the cell projection. It is found in the podosome. Its subcellular location is the invadopodium. The protein resides in the cytoskeleton. The protein localises to the stress fiber. In terms of biological role, may be involved in podosome and invadosome formation. The chain is Actin filament-associated protein 1-like 1 (AFAP1L1) from Bos taurus (Bovine).